We begin with the raw amino-acid sequence, 400 residues long: TBC1 domain family member 13 (400 aa).

A Rab-GAP TBC domain is found at 35–345 (PCEGGLRCLC…RIWDSLFADD (311 aa)).

In terms of assembly, interacts with RAB1A and RAB10; in a GTP-dependent manner.

It localises to the membrane. It is found in the cytoplasm. In terms of biological role, acts as a GTPase-activating protein for RAB35. Together with RAB35 may be involved in regulation of insulin-induced glucose transporter SLC2A4/GLUT4 translocation to the plasma membrane in adipocytes. This Homo sapiens (Human) protein is TBC1 domain family member 13 (TBC1D13).